The chain runs to 461 residues: Aspartic proteinase NANA, chloroplast (461 aa).

Asn-86 carries N-linked (GlcNAc...) asparagine glycosylation. The Peptidase A1 domain occupies 106 to 456 (YFTEIRVGTP…DLMASTLSFA (351 aa)). Asp-124 is a catalytic residue. Asn-274 carries N-linked (GlcNAc...) asparagine glycosylation. The active site involves Asp-338. N-linked (GlcNAc...) asparagine glycosylation occurs at Asn-386.

Belongs to the peptidase A1 family.

It is found in the plastid. The protein resides in the chloroplast. Repressed by pepstatin A. Functionally, aspartic proteinase that can use azocasein as substrate and regulates endogenous sugar levels (e.g. sucrose, glucose and fructose) by modulating starch accumulation and remobilization. Influences general morphology and development. This is Aspartic proteinase NANA, chloroplast from Arabidopsis thaliana (Mouse-ear cress).